We begin with the raw amino-acid sequence, 128 residues long: Ribonuclease P protein component (128 aa).

The protein belongs to the RnpA family. Consists of a catalytic RNA component (M1 or rnpB) and a protein subunit.

The catalysed reaction is Endonucleolytic cleavage of RNA, removing 5'-extranucleotides from tRNA precursor.. In terms of biological role, RNaseP catalyzes the removal of the 5'-leader sequence from pre-tRNA to produce the mature 5'-terminus. It can also cleave other RNA substrates such as 4.5S RNA. The protein component plays an auxiliary but essential role in vivo by binding to the 5'-leader sequence and broadening the substrate specificity of the ribozyme. The chain is Ribonuclease P protein component from Prochlorococcus marinus (strain NATL2A).